Reading from the N-terminus, the 1938-residue chain is Myosin-6 (1938 aa).

One can recognise a Myosin N-terminal SH3-like domain in the interval 31–80 (DIRTECFVPDDKEEYVKAKIVSREGGKVTAETENGKTVTVKEDQVMQQNP). Residues 84–779 (DKIEDMAMLT…LLGLLEEMRD (696 aa)) form the Myosin motor domain. The residue at position 128 (lysine 128) is an N6,N6,N6-trimethyllysine. Position 177-184 (177-184 (GESGAGKT)) interacts with ATP. Residue threonine 378 is modified to Phosphothreonine. At serine 416 the chain carries Phosphoserine. Actin-binding regions lie at residues 656–678 (LNKLMTNLRTTHPHFVRCIIPNE) and 758–772 (KFGHTKVFFKAGLLG). The region spanning 782 to 811 (LSRIITRIQAQARGQLMRIEFKKMVERRDA) is the IQ domain. Calmodulin-binding stretches follow at residues 789-806 (IQAQARGQLMRIEFKKMV) and 815-832 (IQWNIRAFMGVKNWPWMK). Residues 842 to 1938 (KSAETEKEMA…GAKQKMHDEE (1097 aa)) are a coiled coil. Serine 1089 and serine 1138 each carry phosphoserine. The residue at position 1260 (tyrosine 1260) is a Phosphotyrosine. The residue at position 1270 (serine 1270) is a Phosphoserine. Phosphothreonine is present on residues threonine 1276 and threonine 1283. The residue at position 1308 (serine 1308) is a Phosphoserine. At tyrosine 1309 the chain carries Phosphotyrosine. Threonine 1310 is modified (phosphothreonine). Phosphoserine is present on serine 1511. Phosphothreonine occurs at positions 1514 and 1680. Residues 1907-1938 (AEERADIAESQVNKLRAKSRDIGAKQKMHDEE) form a disordered region. Residues 1924 to 1938 (KSRDIGAKQKMHDEE) show a composition bias toward basic and acidic residues.

This sequence belongs to the TRAFAC class myosin-kinesin ATPase superfamily. Myosin family. In terms of assembly, muscle myosin is a hexameric protein that consists of 2 heavy chain subunits (MHC), 2 alkali light chain subunits (MLC) and 2 regulatory light chain subunits (MLC-2).

Its subcellular location is the cytoplasm. The protein localises to the myofibril. In terms of biological role, muscle contraction. The protein is Myosin-6 (Myh6) of Rattus norvegicus (Rat).